The chain runs to 302 residues: Dermonecrotic toxin LiSicTox-alphaIA1bii (302 aa).

The signal sequence occupies residues 1-14; sequence ARVVLGCWSVLSQA. Residues 15–22 constitute a propeptide that is removed on maturation; it reads AQTDDEER. His34 is an active-site residue. Residues Glu54 and Asp56 each coordinate Mg(2+). The Nucleophile role is filled by His70. 2 disulfide bridges follow: Cys74/Cys80 and Cys76/Cys219. Asp114 is a binding site for Mg(2+).

This sequence belongs to the arthropod phospholipase D family. Class II subfamily. Class IIa sub-subfamily. Mg(2+) serves as cofactor. Expressed by the venom gland.

It localises to the secreted. It carries out the reaction an N-(acyl)-sphingosylphosphocholine = an N-(acyl)-sphingosyl-1,3-cyclic phosphate + choline. The catalysed reaction is an N-(acyl)-sphingosylphosphoethanolamine = an N-(acyl)-sphingosyl-1,3-cyclic phosphate + ethanolamine. The enzyme catalyses a 1-acyl-sn-glycero-3-phosphocholine = a 1-acyl-sn-glycero-2,3-cyclic phosphate + choline. It catalyses the reaction a 1-acyl-sn-glycero-3-phosphoethanolamine = a 1-acyl-sn-glycero-2,3-cyclic phosphate + ethanolamine. In terms of biological role, dermonecrotic toxins cleave the phosphodiester linkage between the phosphate and headgroup of certain phospholipids (sphingolipid and lysolipid substrates), forming an alcohol (often choline) and a cyclic phosphate. This toxin acts on sphingomyelin (SM). It may also act on ceramide phosphoethanolamine (CPE), lysophosphatidylcholine (LPC) and lysophosphatidylethanolamine (LPE), but not on lysophosphatidylserine (LPS), and lysophosphatidylglycerol (LPG). It acts by transphosphatidylation, releasing exclusively cyclic phosphate products as second products. Induces hemolysis, dermonecrosis, vascular permeability and platelet aggregation. This is Dermonecrotic toxin LiSicTox-alphaIA1bii from Loxosceles intermedia (Brown spider).